Reading from the N-terminus, the 389-residue chain is Alpha-2B adrenergic receptor (389 aa).

A helical membrane pass occupies residues 1–25; the sequence is AIAAVITFLILFTIFGNALVILAVL. At 26–36 the chain is on the cytoplasmic side; that stretch reads TSRSLRAPQNL. A helical membrane pass occupies residues 37-62; it reads FLVSLAAADILVATLIIPFSLANELL. At 63-72 the chain is on the extracellular side; sequence GYWYFWRTWC. A disulfide bond links Cys72 and Cys151. The helical transmembrane segment at 73 to 95 threads the bilayer; that stretch reads EVYLALDVLFCTSSIVHLCAISL. The Cytoplasmic segment spans residues 96-117; that stretch reads DRYWAVSRALEYNSKRTPRRIK. Residues 118–140 traverse the membrane as a helical segment; that stretch reads CIILTVWLIAAAISLPPLIYKGD. Over 141-156 the chain is Extracellular; the sequence is QGPQPRGRPQCMLNQE. Residues 157 to 180 form a helical membrane-spanning segment; that stretch reads AWYILSSSIGSFFAPCLIMILVYL. Over 181 to 353 the chain is Cytoplasmic; that stretch reads RIYLIAKRSN…LTREKRFTFV (173 aa). Disordered regions lie at residues 192-218 and 231-310; these read RGPRAKGAPGEGESKQPHPLTAGPLAL and DGEA…HLQQ. The segment covering 234–249 has biased composition (basic and acidic residues); the sequence is ANGHSKLTGEKERETS. A helical membrane pass occupies residues 354–377; the sequence is LTVVIGVFVLCWFPFFFSYSLGAI. Residues 378–386 are Extracellular-facing; that stretch reads CPQHCKVPH. The chain crosses the membrane as a helical span at residues 387–389; sequence GLF.

Belongs to the G-protein coupled receptor 1 family. Adrenergic receptor subfamily. ADRA2B sub-subfamily. Interacts with RAB26. Interacts with PPP1R9B.

Its subcellular location is the cell membrane. In terms of biological role, alpha-2 adrenergic receptors mediate the catecholamine-induced inhibition of adenylate cyclase through the action of G proteins. This is Alpha-2B adrenergic receptor (ADRA2B) from Procavia capensis habessinica (Abyssinian hyrax).